We begin with the raw amino-acid sequence, 463 residues long: L-seryl-tRNA(Sec) selenium transferase (463 aa).

Lys295 is subject to N6-(pyridoxal phosphate)lysine.

Belongs to the SelA family. Homodecamer; pentamer of dimers. Binds only one seryl-tRNA(Sec) per dimer. Pyridoxal 5'-phosphate is required as a cofactor.

The protein resides in the cytoplasm. It catalyses the reaction L-seryl-tRNA(Sec) + selenophosphate + H(+) = L-selenocysteinyl-tRNA(Sec) + phosphate. It participates in aminoacyl-tRNA biosynthesis; selenocysteinyl-tRNA(Sec) biosynthesis; selenocysteinyl-tRNA(Sec) from L-seryl-tRNA(Sec) (bacterial route): step 1/1. Functionally, converts seryl-tRNA(Sec) to selenocysteinyl-tRNA(Sec) required for selenoprotein biosynthesis. In Photorhabdus laumondii subsp. laumondii (strain DSM 15139 / CIP 105565 / TT01) (Photorhabdus luminescens subsp. laumondii), this protein is L-seryl-tRNA(Sec) selenium transferase.